Here is a 119-residue protein sequence, read N- to C-terminus: Large ribosomal subunit protein uL22 (119 aa).

This sequence belongs to the universal ribosomal protein uL22 family. In terms of assembly, part of the 50S ribosomal subunit.

In terms of biological role, this protein binds specifically to 23S rRNA; its binding is stimulated by other ribosomal proteins, e.g. L4, L17, and L20. It is important during the early stages of 50S assembly. It makes multiple contacts with different domains of the 23S rRNA in the assembled 50S subunit and ribosome. Functionally, the globular domain of the protein is located near the polypeptide exit tunnel on the outside of the subunit, while an extended beta-hairpin is found that lines the wall of the exit tunnel in the center of the 70S ribosome. In Chlorobium phaeobacteroides (strain DSM 266 / SMG 266 / 2430), this protein is Large ribosomal subunit protein uL22.